Here is a 216-residue protein sequence, read N- to C-terminus: Ribosome maturation factor RimP (216 aa).

The protein belongs to the RimP family.

The protein resides in the cytoplasm. Functionally, required for maturation of 30S ribosomal subunits. The sequence is that of Ribosome maturation factor RimP from Bartonella quintana (strain Toulouse) (Rochalimaea quintana).